Consider the following 273-residue polypeptide: Phosphate import ATP-binding protein PstB (273 aa).

The region spanning 18–257 is the ABC transporter domain; that stretch reads ISLQNVTISY…EFDKTKKIFN (240 aa). 50–57 provides a ligand contact to ATP; sequence GPSGCGKS.

It belongs to the ABC transporter superfamily. Phosphate importer (TC 3.A.1.7) family. The complex is composed of two ATP-binding proteins (PstB), two transmembrane proteins (PstC and PstA) and a solute-binding protein (PstS).

The protein resides in the cell inner membrane. The enzyme catalyses phosphate(out) + ATP + H2O = ADP + 2 phosphate(in) + H(+). Part of the ABC transporter complex PstSACB involved in phosphate import. Responsible for energy coupling to the transport system. The chain is Phosphate import ATP-binding protein PstB from Prochlorococcus marinus (strain SARG / CCMP1375 / SS120).